Reading from the N-terminus, the 163-residue chain is NADH-quinone oxidoreductase subunit I (163 aa).

2 consecutive 4Fe-4S ferredoxin-type domains span residues 54–84 and 94–123; these read LRRY…IESD and TRYD…ETPI. [4Fe-4S] cluster-binding residues include Cys-64, Cys-67, Cys-70, Cys-74, Cys-103, Cys-106, Cys-109, and Cys-113.

Belongs to the complex I 23 kDa subunit family. NDH-1 is composed of 14 different subunits. Subunits NuoA, H, J, K, L, M, N constitute the membrane sector of the complex. [4Fe-4S] cluster is required as a cofactor.

The protein localises to the cell inner membrane. The catalysed reaction is a quinone + NADH + 5 H(+)(in) = a quinol + NAD(+) + 4 H(+)(out). Its function is as follows. NDH-1 shuttles electrons from NADH, via FMN and iron-sulfur (Fe-S) centers, to quinones in the respiratory chain. The immediate electron acceptor for the enzyme in this species is believed to be ubiquinone. Couples the redox reaction to proton translocation (for every two electrons transferred, four hydrogen ions are translocated across the cytoplasmic membrane), and thus conserves the redox energy in a proton gradient. The polypeptide is NADH-quinone oxidoreductase subunit I (Cupriavidus pinatubonensis (strain JMP 134 / LMG 1197) (Cupriavidus necator (strain JMP 134))).